The sequence spans 304 residues: N-acetyl-D-glucosamine kinase (304 aa).

Residues 4 to 11 and 133 to 140 contribute to the ATP site; these read GFDMGGTK and GVGGGLIV. Histidine 157, cysteine 177, cysteine 179, and cysteine 184 together coordinate Zn(2+).

It belongs to the ROK (NagC/XylR) family. NagK subfamily.

The catalysed reaction is N-acetyl-D-glucosamine + ATP = N-acetyl-D-glucosamine 6-phosphate + ADP + H(+). Its pathway is cell wall biogenesis; peptidoglycan recycling. Functionally, catalyzes the phosphorylation of N-acetyl-D-glucosamine (GlcNAc) derived from cell-wall degradation, yielding GlcNAc-6-P. The sequence is that of N-acetyl-D-glucosamine kinase from Yersinia pseudotuberculosis serotype O:3 (strain YPIII).